A 173-amino-acid chain; its full sequence is Crossover junction endodeoxyribonuclease RuvC (173 aa).

Catalysis depends on residues Asp-8, Glu-67, and Asp-139. Residues Asp-8, Glu-67, and Asp-139 each contribute to the Mg(2+) site.

The protein belongs to the RuvC family. Homodimer which binds Holliday junction (HJ) DNA. The HJ becomes 2-fold symmetrical on binding to RuvC with unstacked arms; it has a different conformation from HJ DNA in complex with RuvA. In the full resolvosome a probable DNA-RuvA(4)-RuvB(12)-RuvC(2) complex forms which resolves the HJ. Requires Mg(2+) as cofactor.

Its subcellular location is the cytoplasm. It catalyses the reaction Endonucleolytic cleavage at a junction such as a reciprocal single-stranded crossover between two homologous DNA duplexes (Holliday junction).. In terms of biological role, the RuvA-RuvB-RuvC complex processes Holliday junction (HJ) DNA during genetic recombination and DNA repair. Endonuclease that resolves HJ intermediates. Cleaves cruciform DNA by making single-stranded nicks across the HJ at symmetrical positions within the homologous arms, yielding a 5'-phosphate and a 3'-hydroxyl group; requires a central core of homology in the junction. The consensus cleavage sequence is 5'-(A/T)TT(C/G)-3'. Cleavage occurs on the 3'-side of the TT dinucleotide at the point of strand exchange. HJ branch migration catalyzed by RuvA-RuvB allows RuvC to scan DNA until it finds its consensus sequence, where it cleaves and resolves the cruciform DNA. The polypeptide is Crossover junction endodeoxyribonuclease RuvC (Shigella flexneri serotype 5b (strain 8401)).